A 131-amino-acid polypeptide reads, in one-letter code: Capsid protein (131 aa).

Ca(2+) is bound by residues Gln-2 and Tyr-131.

The protein belongs to the Leviviricetes capsid protein family. Homodimer. The capsid proteins form dimers that assemble by group of 5. Twelve such pentamers are linked together with free dimers. The homodimers binds to the viral RNA via an operator hairpin, but also to many other RNA sequences in the viral genome; this interaction probably shifts the virus from the replicative to the assembly phase and ensures specific encapsidation of the viral genome.

It is found in the virion. Capsid protein self-assembles to form an icosahedral capsid with a T=3 symmetry, about 26 nm in diameter, and consisting of 89 capsid proteins dimers (178 capsid proteins). Involved in viral genome encapsidation through the interaction between a capsid protein dimer and the multiple packaging signals present in the RNA genome. The capsid also contains 1 copy of the A2 maturation protein. In terms of biological role, acts as a translational repressor of viral replicase synthesis late in infection. This latter function is the result of capsid protein interaction with an RNA hairpin which contains the replicase ribosome-binding site. The protein is Capsid protein of Pseudomonas phage PRR1 (Bacteriophage PRR1).